Here is a 691-residue protein sequence, read N- to C-terminus: Elongation factor G (691 aa).

Positions 8–283 constitute a tr-type G domain; sequence EDYRNFGIMA…AVVDYLPSPA (276 aa). GTP contacts are provided by residues 17–24, 81–85, and 135–138; these read AHIDAGKT, DTPGH, and NKMD.

This sequence belongs to the TRAFAC class translation factor GTPase superfamily. Classic translation factor GTPase family. EF-G/EF-2 subfamily.

Its subcellular location is the cytoplasm. Functionally, catalyzes the GTP-dependent ribosomal translocation step during translation elongation. During this step, the ribosome changes from the pre-translocational (PRE) to the post-translocational (POST) state as the newly formed A-site-bound peptidyl-tRNA and P-site-bound deacylated tRNA move to the P and E sites, respectively. Catalyzes the coordinated movement of the two tRNA molecules, the mRNA and conformational changes in the ribosome. This is Elongation factor G from Methylobacterium sp. (strain 4-46).